The chain runs to 130 residues: Transcription antitermination protein NusB (130 aa).

It belongs to the NusB family.

Its function is as follows. Involved in transcription antitermination. Required for transcription of ribosomal RNA (rRNA) genes. Binds specifically to the boxA antiterminator sequence of the ribosomal RNA (rrn) operons. This Bacillus anthracis (strain A0248) protein is Transcription antitermination protein NusB.